A 124-amino-acid chain; its full sequence is Ribonuclease P protein component (124 aa).

It belongs to the RnpA family. Consists of a catalytic RNA component (M1 or rnpB) and a protein subunit.

The catalysed reaction is Endonucleolytic cleavage of RNA, removing 5'-extranucleotides from tRNA precursor.. Functionally, RNaseP catalyzes the removal of the 5'-leader sequence from pre-tRNA to produce the mature 5'-terminus. It can also cleave other RNA substrates such as 4.5S RNA. The protein component plays an auxiliary but essential role in vivo by binding to the 5'-leader sequence and broadening the substrate specificity of the ribozyme. The chain is Ribonuclease P protein component from Maridesulfovibrio salexigens (strain ATCC 14822 / DSM 2638 / NCIMB 8403 / VKM B-1763) (Desulfovibrio salexigens).